A 621-amino-acid polypeptide reads, in one-letter code: Methionine--tRNA ligase (621 aa).

Residues 11–21 (PYANGPRHIGH) carry the 'HIGH' region motif. The Zn(2+) site is built by Cys-143, Cys-146, Cys-156, and Cys-159. Positions 347-351 (KFSSS) match the 'KMSKS' region motif. Residue Ser-350 participates in ATP binding.

This sequence belongs to the class-I aminoacyl-tRNA synthetase family. MetG type 1 subfamily. Monomer. Requires Zn(2+) as cofactor.

The protein resides in the cytoplasm. The catalysed reaction is tRNA(Met) + L-methionine + ATP = L-methionyl-tRNA(Met) + AMP + diphosphate. Is required not only for elongation of protein synthesis but also for the initiation of all mRNA translation through initiator tRNA(fMet) aminoacylation. This is Methionine--tRNA ligase from Bifidobacterium longum subsp. infantis (strain ATCC 15697 / DSM 20088 / JCM 1222 / NCTC 11817 / S12).